The primary structure comprises 237 residues: Ribose-5-phosphate isomerase A (237 aa).

Residues 28-31, 83-86, and 97-100 contribute to the substrate site; these read SGST, DGAD, and KGRG. The active-site Proton acceptor is glutamate 106. Lysine 124 is a substrate binding site.

The protein belongs to the ribose 5-phosphate isomerase family. As to quaternary structure, homodimer.

It carries out the reaction aldehydo-D-ribose 5-phosphate = D-ribulose 5-phosphate. The protein operates within carbohydrate degradation; pentose phosphate pathway; D-ribose 5-phosphate from D-ribulose 5-phosphate (non-oxidative stage): step 1/1. In terms of biological role, catalyzes the reversible conversion of ribose-5-phosphate to ribulose 5-phosphate. The polypeptide is Ribose-5-phosphate isomerase A (Thermomicrobium roseum (strain ATCC 27502 / DSM 5159 / P-2)).